The chain runs to 248 residues: Isoprenyl transferase (248 aa).

Residue Asp23 is part of the active site. Asp23 lines the Mg(2+) pocket. Residues Gly24–Arg27, Trp28, Arg36, His40, and Ser68–Glu70 contribute to the substrate site. Asn71 functions as the Proton acceptor in the catalytic mechanism. Substrate-binding positions include Trp72, Arg74, Arg185, and Arg191–Ser193. Glu204 contacts Mg(2+).

This sequence belongs to the UPP synthase family. Homodimer. Mg(2+) serves as cofactor.

Functionally, catalyzes the condensation of isopentenyl diphosphate (IPP) with allylic pyrophosphates generating different type of terpenoids. This chain is Isoprenyl transferase, found in Neisseria meningitidis serogroup A / serotype 4A (strain DSM 15465 / Z2491).